The following is a 360-amino-acid chain: D-alanine--D-alanine ligase (360 aa).

The 210-residue stretch at 134–343 (KILAQRVGVP…YTELITRLIQ (210 aa)) folds into the ATP-grasp domain. 169–224 (AEKLGHDMFVKPSNQGSSVGVNHVTNAEEYAAALEEAFKYDDKVLVEETVPGTEVE) serves as a coordination point for ATP. Residues Asp-297, Glu-310, and Asn-312 each coordinate Mg(2+).

The protein belongs to the D-alanine--D-alanine ligase family. The cofactor is Mg(2+). It depends on Mn(2+) as a cofactor.

Its subcellular location is the cytoplasm. It carries out the reaction 2 D-alanine + ATP = D-alanyl-D-alanine + ADP + phosphate + H(+). It participates in cell wall biogenesis; peptidoglycan biosynthesis. In terms of biological role, cell wall formation. The polypeptide is D-alanine--D-alanine ligase (Lactobacillus acidophilus (strain ATCC 700396 / NCK56 / N2 / NCFM)).